A 250-amino-acid polypeptide reads, in one-letter code: Uracil-DNA glycosylase (250 aa).

The Proton acceptor role is filled by aspartate 78.

It belongs to the uracil-DNA glycosylase (UDG) superfamily. UNG family.

Its subcellular location is the cytoplasm. The enzyme catalyses Hydrolyzes single-stranded DNA or mismatched double-stranded DNA and polynucleotides, releasing free uracil.. Functionally, excises uracil residues from the DNA which can arise as a result of misincorporation of dUMP residues by DNA polymerase or due to deamination of cytosine. The sequence is that of Uracil-DNA glycosylase from Albidiferax ferrireducens (strain ATCC BAA-621 / DSM 15236 / T118) (Rhodoferax ferrireducens).